A 336-amino-acid chain; its full sequence is Pyridoxal 5'-phosphate synthase subunit PdxS (336 aa).

Position 30 (Asp-30) interacts with D-ribose 5-phosphate. Lys-87 serves as the catalytic Schiff-base intermediate with D-ribose 5-phosphate. Position 159 (Gly-159) interacts with D-ribose 5-phosphate. Residue Arg-171 participates in D-glyceraldehyde 3-phosphate binding. D-ribose 5-phosphate is bound by residues Gly-257 and 278 to 279; that span reads GS.

The protein belongs to the PdxS/SNZ family. In terms of assembly, in the presence of PdxT, forms a dodecamer of heterodimers.

It carries out the reaction aldehydo-D-ribose 5-phosphate + D-glyceraldehyde 3-phosphate + L-glutamine = pyridoxal 5'-phosphate + L-glutamate + phosphate + 3 H2O + H(+). It functions in the pathway cofactor biosynthesis; pyridoxal 5'-phosphate biosynthesis. Catalyzes the formation of pyridoxal 5'-phosphate from ribose 5-phosphate (RBP), glyceraldehyde 3-phosphate (G3P) and ammonia. The ammonia is provided by the PdxT subunit. Can also use ribulose 5-phosphate and dihydroxyacetone phosphate as substrates, resulting from enzyme-catalyzed isomerization of RBP and G3P, respectively. This Thermoplasma acidophilum (strain ATCC 25905 / DSM 1728 / JCM 9062 / NBRC 15155 / AMRC-C165) protein is Pyridoxal 5'-phosphate synthase subunit PdxS.